A 93-amino-acid polypeptide reads, in one-letter code: Protein S100-A8 (93 aa).

2 consecutive EF-hand domains span residues 12-47 (IIDV…QYIR) and 46-81 (IRKK…MGVA). Residues histidine 17 and histidine 27 each coordinate Zn(2+). Residue aspartate 33 coordinates Ca(2+). The residue at position 42 (cysteine 42) is an S-nitrosocysteine. Ca(2+) is bound by residues aspartate 59, asparagine 61, aspartate 63, and glutamate 70. Histidine 83 and histidine 87 together coordinate Zn(2+).

Belongs to the S-100 family. In terms of assembly, homodimer. Preferentially exists as a heterodimer or heterotetramer with S100A9 known as calprotectin (S100A8/A9). S100A8 interacts with AGER, ATP2A2 and with the heterodimeric complex formed by TLR4 and LY96. Interacts with GAPDH. Calprotectin (S100A8/9) interacts with CEACAM3 and tubulin filaments in a calcium-dependent manner. Heterotetrameric calprotectin (S100A8/A9) interacts with ANXA6 and associates with tubulin filaments in activated monocytes. S100A8 and calprotectin (S100A8/9) interact with NCF2/P67PHOX, RAC1 and RAC2. Calprotectin (S100A8/9) interacts with CYBA and CYBB. Calprotectin (S100A8/9) interacts with NOS2 to form the iNOS-S100A8/A9 transnitrosylase complex; induced by LDL(ox). Calprotectin (S100A8/9) interacts with CD69. As to expression, calprotectin (S100A8/9) is predominantly expressed in myeloid cells. Except for inflammatory conditions, the expression is restricted to a specific stage of myeloid differentiation since both proteins are expressed in circulating neutrophils and monocytes but are absent in normal tissue macrophages and lymphocytes. Under chronic inflammatory conditions, such as psoriasis and malignant disorders, also expressed in the epidermis. Found in high concentrations at local sites of inflammation or in the serum of patients with inflammatory diseases such as rheumatoid, cystic fibrosis, inflammatory bowel disease, Crohn's disease, giant cell arteritis, cystic fibrosis, Sjogren's syndrome, systemic lupus erythematosus, and progressive systemic sclerosis. Involved in the formation and deposition of amyloids in the aging prostate known as corpora amylacea inclusions. Strongly up-regulated in many tumors, including gastric, esophageal, colon, pancreatic, bladder, ovarian, thyroid, breast and skin cancers.

It localises to the secreted. Its subcellular location is the cytoplasm. The protein resides in the cytoskeleton. The protein localises to the cell membrane. With respect to regulation, calprotectin (S100A8/A9) activity on TLR4 signaling is inhibited by paquinimod. Functionally, S100A8 is a calcium- and zinc-binding protein which plays a prominent role in the regulation of inflammatory processes and immune response. It can induce neutrophil chemotaxis and adhesion. Predominantly found as calprotectin (S100A8/A9) which has a wide plethora of intra- and extracellular functions. The intracellular functions include: facilitating leukocyte arachidonic acid trafficking and metabolism, modulation of the tubulin-dependent cytoskeleton during migration of phagocytes and activation of the neutrophilic NADPH-oxidase. Also participates in regulatory T-cell differentiation together with CD69. Activates NADPH-oxidase by facilitating the enzyme complex assembly at the cell membrane, transferring arachidonic acid, an essential cofactor, to the enzyme complex and S100A8 contributes to the enzyme assembly by directly binding to NCF2/P67PHOX. The extracellular functions involve pro-inflammatory, antimicrobial, oxidant-scavenging and apoptosis-inducing activities. Its pro-inflammatory activity includes recruitment of leukocytes, promotion of cytokine and chemokine production, and regulation of leukocyte adhesion and migration. Acts as an alarmin or a danger associated molecular pattern (DAMP) molecule and stimulates innate immune cells via binding to pattern recognition receptors such as Toll-like receptor 4 (TLR4) and receptor for advanced glycation endproducts (AGER). Binding to TLR4 and AGER activates the MAP-kinase and NF-kappa-B signaling pathways resulting in the amplification of the pro-inflammatory cascade. Has antimicrobial activity towards bacteria and fungi and exerts its antimicrobial activity probably via chelation of Zn(2+) which is essential for microbial growth. Can induce cell death via autophagy and apoptosis and this occurs through the cross-talk of mitochondria and lysosomes via reactive oxygen species (ROS) and the process involves BNIP3. Can regulate neutrophil number and apoptosis by an anti-apoptotic effect; regulates cell survival via ITGAM/ITGB and TLR4 and a signaling mechanism involving MEK-ERK. Its role as an oxidant scavenger has a protective role in preventing exaggerated tissue damage by scavenging oxidants. Can act as a potent amplifier of inflammation in autoimmunity as well as in cancer development and tumor spread. The iNOS-S100A8/A9 transnitrosylase complex directs selective inflammatory stimulus-dependent S-nitrosylation of GAPDH and probably multiple targets such as ANXA5, EZR, MSN and VIM by recognizing a [IL]-x-C-x-x-[DE] motif; S100A8 seems to contribute to S-nitrosylation site selectivity. (Microbial infection) Upon infection by human coronavirus SARS-CoV-2, may induce expansion of aberrant immature neutrophils in a TLR4-dependent manner. The chain is Protein S100-A8 from Homo sapiens (Human).